The primary structure comprises 101 residues: Small ribosomal subunit protein uS10 (101 aa).

This sequence belongs to the universal ribosomal protein uS10 family. Part of the 30S ribosomal subunit.

Functionally, involved in the binding of tRNA to the ribosomes. The polypeptide is Small ribosomal subunit protein uS10 (Cytophaga hutchinsonii (strain ATCC 33406 / DSM 1761 / CIP 103989 / NBRC 15051 / NCIMB 9469 / D465)).